The following is a 538-amino-acid chain: Bifunctional purine biosynthesis protein PurH (538 aa).

One can recognise an MGS-like domain in the interval 8 to 158 (IPAPDKVEIK…KNHAYVTILT (151 aa)).

This sequence belongs to the PurH family.

It catalyses the reaction (6R)-10-formyltetrahydrofolate + 5-amino-1-(5-phospho-beta-D-ribosyl)imidazole-4-carboxamide = 5-formamido-1-(5-phospho-D-ribosyl)imidazole-4-carboxamide + (6S)-5,6,7,8-tetrahydrofolate. The enzyme catalyses IMP + H2O = 5-formamido-1-(5-phospho-D-ribosyl)imidazole-4-carboxamide. It participates in purine metabolism; IMP biosynthesis via de novo pathway; 5-formamido-1-(5-phospho-D-ribosyl)imidazole-4-carboxamide from 5-amino-1-(5-phospho-D-ribosyl)imidazole-4-carboxamide (10-formyl THF route): step 1/1. It functions in the pathway purine metabolism; IMP biosynthesis via de novo pathway; IMP from 5-formamido-1-(5-phospho-D-ribosyl)imidazole-4-carboxamide: step 1/1. In Rhizobium etli (strain CIAT 652), this protein is Bifunctional purine biosynthesis protein PurH.